The chain runs to 522 residues: Probable cytochrome P450 12e1, mitochondrial (522 aa).

Cys-468 is a binding site for heme.

This sequence belongs to the cytochrome P450 family. Heme serves as cofactor.

The protein resides in the mitochondrion membrane. The chain is Probable cytochrome P450 12e1, mitochondrial (Cyp12e1) from Drosophila melanogaster (Fruit fly).